Consider the following 108-residue polypeptide: Glutaredoxin 4 (108 aa).

The region spanning 5 to 107 is the Glutaredoxin domain; the sequence is IKKIQNQIQN…KTISICDKLN (103 aa). Residue Lys-22 coordinates glutathione. Cys-30 lines the [2Fe-2S] cluster pocket. Residues Arg-59, Phe-71, and 84 to 85 contribute to the glutathione site; that span reads CN.

Belongs to the glutaredoxin family. Monothiol subfamily. Homodimer.

Its subcellular location is the cytoplasm. Monothiol glutaredoxin involved in the biogenesis of iron-sulfur clusters. This chain is Glutaredoxin 4 (grxD), found in Buchnera aphidicola subsp. Baizongia pistaciae (strain Bp).